Reading from the N-terminus, the 478-residue chain is Protein adenylyltransferase VbhT (478 aa).

A Fido domain is found at 55–200 (FDLDHMKKIH…RRNLTEFTVN (146 aa)). ATP-binding positions include 85–88 (KDNS), 133–136 (NALH), 140–147 (EGNGRTLR), and Ser-175.

In terms of assembly, homodimer. Interacts with VbhA.

The catalysed reaction is L-tyrosyl-[protein] + ATP = O-(5'-adenylyl)-L-tyrosyl-[protein] + diphosphate. The enzyme catalyses L-threonyl-[protein] + ATP = 3-O-(5'-adenylyl)-L-threonyl-[protein] + diphosphate. Its activity is regulated as follows. Adenylyltransferase activity is inhibited by antitoxin VbhA; which acts by competing with ATP-binding at Arg-147 and prevents productive ATP-binding. Its function is as follows. Toxic component of type II toxin-antitoxin (TA) system VbhT-VbhA. Adenylyltransferase involved in virulence by mediating the addition of adenosine 5'-monophosphate (AMP) to specific residue of host GTPases. The resulting AMPylation affects GTPases, impairing actin assembly in infected cells. The chain is Protein adenylyltransferase VbhT (vbhT) from Bartonella schoenbuchensis (strain DSM 13525 / NCTC 13165 / R1).